We begin with the raw amino-acid sequence, 234 residues long: MYLFFSNLSFNDICIITTTIPKMLMNVQSHDQSITYLGCLSQVYLIVNFGSIESCLLAVMAYDRYVAICHPLKYTVIMNHYFCVMLLLFACSLALHMCLFHILMVLILTFCTKTEIPHFFCELAHIIKLTCSDNFINYLLIYTVSVLFFGVHIVGIILSYIYTVSSVLRMSLLGGMYKAFSTCGSHLSVVSLFYGTGFGVHISSPLTDSPRKTVVASVMYTVVTQMHGPFIYSL.

A helical transmembrane segment spans residues 1 to 11 (MYLFFSNLSFN). At 12 to 42 (DICIITTTIPKMLMNVQSHDQSITYLGCLSQ) the chain is on the extracellular side. An intrachain disulfide couples Cys39 to Cys121. A helical membrane pass occupies residues 43-62 (VYLIVNFGSIESCLLAVMAY). The Cytoplasmic portion of the chain corresponds to 63–84 (DRYVAICHPLKYTVIMNHYFCV). The chain crosses the membrane as a helical span at residues 85 to 105 (MLLLFACSLALHMCLFHILMV). The Extracellular segment spans residues 106–138 (LILTFCTKTEIPHFFCELAHIIKLTCSDNFINY). A helical transmembrane segment spans residues 139–160 (LLIYTVSVLFFGVHIVGIILSY). At 161–182 (IYTVSSVLRMSLLGGMYKAFST) the chain is on the cytoplasmic side. The chain crosses the membrane as a helical span at residues 183–202 (CGSHLSVVSLFYGTGFGVHI). Topologically, residues 203 to 212 (SSPLTDSPRK) are extracellular. Residues 213 to 234 (TVVASVMYTVVTQMHGPFIYSL) traverse the membrane as a helical segment.

This sequence belongs to the G-protein coupled receptor 1 family. In terms of tissue distribution, tongue specific.

The protein localises to the cell membrane. In terms of biological role, possible taste receptor. This Rattus norvegicus (Rat) protein is Putative gustatory receptor clone PTE38.